Reading from the N-terminus, the 726-residue chain is Cyclic nucleotide-gated ion channel 2 (726 aa).

The Cytoplasmic portion of the chain corresponds to 1-127 (MPSHPNFIFR…SKRVQRWNRA (127 aa)). Positions 26-46 (IDENSNLQINGGDSSSSGSDE) are disordered. A compositionally biased stretch (low complexity) spans 36–45 (GGDSSSSGSD). The chain crosses the membrane as a helical span at residues 128–148 (LLLARGMALAVDPLFFYALSI). The Extracellular segment spans residues 149–162 (GRTTGPACLYMDGA). Residues 163–183 (FAAVVTVLRTCLDAVHLWHVW) form a helical membrane-spanning segment. At 184–219 (LQFRLAYVSRESLVVGCGKLVWDPRAIASHYARSLT) the chain is on the cytoplasmic side. The helical transmembrane segment at 220–240 (GFWFDVIVILPVPQAVFWLVV) threads the bilayer. At 241-254 (PKLIREEKVKLIMT) the chain is on the extracellular side. Residues 255 to 275 (ILLLIFLFQFLPKIYHCICLM) form a helical membrane-spanning segment. At 276–282 (RRMQKVT) the chain is on the cytoplasmic side. The helical transmembrane segment at 283–303 (GYIFGTIWWGFALNLIAYFIA) threads the bilayer. Residues 304-424 (SHVAGGCWYV…ANDLEPTSNW (121 aa)) lie on the Extracellular side of the membrane. Residues 425-445 (LEVIFSIVMVLSGLLLFTLLI) form a helical membrane-spanning segment. At 446-726 (GNIQVFLHAV…MSIRPHDHLE (281 aa)) the chain is on the cytoplasmic side. Residues 531–661 (LFRG…ARYY) and D600 contribute to the a nucleoside 3',5'-cyclic phosphate site. Residues 645–661 (FRYKFANERLKRTARYY) form a calmodulin-binding region. The 30-residue stretch at 666–695 (RTWAAVNIQMAWRRRRKRTRGENIGGSMSP) folds into the IQ domain.

Belongs to the cyclic nucleotide-gated cation channel (TC 1.A.1.5) family. In terms of assembly, homotetramer or heterotetramer (Potential). Binds calmodulin-1/4 with a higher affinity than calmodulin-2/3/5. In terms of tissue distribution, expressed in the whole plant but only weakly in roots. Strongly expressed in the expanded cotyledons of 14-day-old seedlings and detected later in leaves after the transition to flowering. Also detected in flowers during organ senescence and in the dehiscence zone of siliques.

The protein localises to the cell membrane. Functionally, acts as a cyclic nucleotide-gated ion channel. Permeable to potassium and calcium in a cyclic nucleotide-dependent fashion (cAMP or cGMP). Could also transport lithium, cesium and rubium and displays a strong selectivity against sodium. Seems to directly participate in pathogen-induced calcium influx. May function in homeostasis, re-establishing ionic balance after defense action and/or other stimuli. Could mediate the initiation of the developmentally regulated cell death programs. The chain is Cyclic nucleotide-gated ion channel 2 (CNGC2) from Arabidopsis thaliana (Mouse-ear cress).